Reading from the N-terminus, the 270-residue chain is Orotidine 5'-phosphate decarboxylase (270 aa).

Substrate contacts are provided by residues aspartate 41, 63 to 65, 95 to 104, tyrosine 221, and arginine 239; these read KTH and DRKFADIGNT. Residue lysine 97 is the Proton donor of the active site.

Belongs to the OMP decarboxylase family.

The enzyme catalyses orotidine 5'-phosphate + H(+) = UMP + CO2. It functions in the pathway pyrimidine metabolism; UMP biosynthesis via de novo pathway; UMP from orotate: step 2/2. The protein is Orotidine 5'-phosphate decarboxylase (URA3) of Candida boidinii (Yeast).